Here is a 538-residue protein sequence, read N- to C-terminus: Phosphoenolpyruvate carboxykinase (ATP) (538 aa).

Residues arginine 64, tyrosine 206, and lysine 212 each coordinate substrate. ATP-binding positions include lysine 212, histidine 231, and 247–255 (GLSGTGKTT). Mn(2+)-binding residues include lysine 212 and histidine 231. Position 268 (aspartate 268) interacts with Mn(2+). ATP-binding positions include glutamate 296, arginine 332, 448–449 (RI), and threonine 454. Arginine 332 serves as a coordination point for substrate.

Belongs to the phosphoenolpyruvate carboxykinase (ATP) family. In terms of assembly, monomer. Mn(2+) serves as cofactor.

Its subcellular location is the cytoplasm. It catalyses the reaction oxaloacetate + ATP = phosphoenolpyruvate + ADP + CO2. It functions in the pathway carbohydrate biosynthesis; gluconeogenesis. Functionally, involved in the gluconeogenesis. Catalyzes the conversion of oxaloacetate (OAA) to phosphoenolpyruvate (PEP) through direct phosphoryl transfer between the nucleoside triphosphate and OAA. The chain is Phosphoenolpyruvate carboxykinase (ATP) from Enterobacter sp. (strain 638).